The following is a 202-amino-acid chain: Transmembrane 4 L6 family member 1 (202 aa).

Residues 1–9 lie on the Cytoplasmic side of the membrane; the sequence is MCYGKCARC. Residues 10-30 form a helical membrane-spanning segment; sequence IGHSLVGLALLCIAANILLYF. Topologically, residues 31–49 are extracellular; that stretch reads PNGETKYASENHLSRFVWF. A helical transmembrane segment spans residues 50–70; that stretch reads FSGIVGGGLLMLLPAFVFIGL. Residues 71 to 93 are Cytoplasmic-facing; that stretch reads EQDDCCGCCGHENCGKRCAMLSS. Residues 94-114 form a helical membrane-spanning segment; sequence VLAALIGIAGSGYCVIVAALG. The Extracellular segment spans residues 115–161; that stretch reads LAEGPLCLDSLGQWNYTFASTEGQYLLDTSTWSECTEPKHIVEWNVS. N-linked (GlcNAc...) asparagine glycosylation is found at Asn129 and Asn159. Residues 162–182 traverse the membrane as a helical segment; the sequence is LFSILLALGGIEFILCLIQVI. The Cytoplasmic portion of the chain corresponds to 183 to 202; sequence NGVLGGICGFCCSHQQQYDC.

Belongs to the L6 tetraspanin family. As to quaternary structure, present in high molecular weight complexes in tumor cells. Interacts with SDCBP2. As to expression, highly expressed in lung, breast, colon and ovarian carcinomas. It is also present on some normal cells, endothelial cells in particular.

Its subcellular location is the membrane. This chain is Transmembrane 4 L6 family member 1 (TM4SF1), found in Homo sapiens (Human).